Here is a 109-residue protein sequence, read N- to C-terminus: Aquaporin-2 (109 aa).

At 1 to 6 (SIAFSR) the chain is on the cytoplasmic side. The chain crosses the membrane as a helical span at residues 7–27 (AVFSEFLATLLFVFFGLGSAL). Residues 28-35 (NWPQALPS) are Extracellular-facing. A helical membrane pass occupies residues 36–54 (VLQIAMAFGLAIGTLVQTL). The Cytoplasmic segment spans residues 55–59 (GHISG). The discontinuously helical intramembrane region spans 60–69 (AHINPAVTVA). Positions 63–65 (NPA) match the NPA 1 motif. The Cytoplasmic portion of the chain corresponds to 70–80 (CLVGCHVSFLR). The helical transmembrane segment at 81-102 (ATFYLAAQLLGAVAGAALLHEL) threads the bilayer. The Extracellular segment spans residues 103-109 (TPPDIRG).

The protein belongs to the MIP/aquaporin (TC 1.A.8) family. Homotetramer. Post-translationally, serine phosphorylation is necessary and sufficient for expression at the apical membrane. Endocytosis is not phosphorylation-dependent. N-glycosylated.

It is found in the apical cell membrane. It localises to the basolateral cell membrane. The protein resides in the cell membrane. Its subcellular location is the cytoplasmic vesicle membrane. The protein localises to the golgi apparatus. It is found in the trans-Golgi network membrane. The enzyme catalyses H2O(in) = H2O(out). The catalysed reaction is glycerol(in) = glycerol(out). In terms of biological role, forms a water-specific channel that provides the plasma membranes of renal collecting duct with high permeability to water, thereby permitting water to move in the direction of an osmotic gradient. Plays an essential role in renal water homeostasis. Could also be permeable to glycerol. This Elephas maximus (Indian elephant) protein is Aquaporin-2.